A 153-amino-acid chain; its full sequence is Proline-rich membrane anchor 1 (153 aa).

Positions 1–35 are cleaved as a signal peptide; it reads MLLRDLVPRHGCCWPSLLLHCALHPLWGLVQVTHA. The Extracellular portion of the chain corresponds to 36–92; that stretch reads EPQKSCSKVTDSCQHICQCRPPPPLPPPPPPPPPPRLLSAPAPNSTSCPAEDSWWSG. The PRAD domain maps to 56–70; the sequence is PPPPLPPPPPPPPPP. The segment covering 59 to 71 has biased composition (pro residues); the sequence is PLPPPPPPPPPPR. The interval 59–79 is disordered; that stretch reads PLPPPPPPPPPPRLLSAPAPN. Asparagine 79 is a glycosylation site (N-linked (GlcNAc...) asparagine). Residues 93 to 113 form a helical membrane-spanning segment; that stretch reads LVIIVAVVCASLVFLTVLVII. Over 114 to 153 the chain is Cytoplasmic; it reads CYKAIKRKPLRKDENGTSVAEYPMSSSQSHKGVDVNAAVV. The segment at 129 to 153 is disordered; it reads GTSVAEYPMSSSQSHKGVDVNAAVV.

As to quaternary structure, interacts with ACHE, probably through disulfide bonds. As to expression, predominantly expressed in the central nervous system, including in the brain. Also expressed in muscle, heart and kidney. Isoform 1 may be predominant in the cortex and striatum, while isoform 2 is more abundant in the cerebellum.

The protein localises to the cell membrane. It is found in the cell junction. Its subcellular location is the synapse. Required to anchor acetylcholinesterase (ACHE) to the basal lamina of the neuromuscular junction and to the membrane of neuronal synapses in brain. Also able to organize ACHE into tetramers. The chain is Proline-rich membrane anchor 1 (Prima1) from Mus musculus (Mouse).